The primary structure comprises 299 residues: Bifunctional phosphoglucose/phosphomannose isomerase (299 aa).

One can recognise an SIS domain in the interval Asp27–Lys177. The D-fructose 6-phosphate site is built by Gly44, Ser45, Ser84, Ser86, Thr89, and Arg132. Glu200 acts as the Proton acceptor in catalysis. Positions 216 and 295 each coordinate D-fructose 6-phosphate. His216 acts as the Proton donor in catalysis. Lys295 (proton acceptor) is an active-site residue.

It belongs to the PGI/PMI family. As to quaternary structure, homodimer.

It catalyses the reaction alpha-D-glucose 6-phosphate = beta-D-fructose 6-phosphate. It carries out the reaction D-mannose 6-phosphate = D-fructose 6-phosphate. Its activity is regulated as follows. Presence or absence of metal ions or EDTA does not significantly affect the phosphoglucose isomerase activity. Functionally, dual specificity isomerase that catalyzes the isomerization of both glucose-6-phosphate and mannose-6-phosphate to fructose-6-phosphate with nearly similar catalytic efficiency. Also catalyzes the epimerization of mannose 6-phosphate to glucose 6-phosphate but the rate of epimerization reaction is 20-fold lower than that of isomerization reaction. This Pyrobaculum calidifontis (strain DSM 21063 / JCM 11548 / VA1) protein is Bifunctional phosphoglucose/phosphomannose isomerase.